The chain runs to 432 residues: Transcriptional adapter 3 (432 aa).

A Glycyl lysine isopeptide (Lys-Gly) (interchain with G-Cter in SUMO2) cross-link involves residue Lys21. Positions 40 to 69 (IEELDTLQLELETLLSSASRRLRVLEAETQ) form a coiled coil. The tract at residues 87 to 127 (GRDHELGAPPKHGKPKKQKLEGKAGHGPGPGPGRPKSKNLQ) is disordered. Lys129 participates in a covalent cross-link: Glycyl lysine isopeptide (Lys-Gly) (interchain with G-Cter in SUMO2). 2 stretches are compositionally biased toward basic and acidic residues: residues 211–223 (DGAR…DKKK) and 232–251 (LDTK…HEQP). 2 disordered regions span residues 211 to 257 (DGAR…GCPF) and 271 to 319 (ENII…SRIK). Residues Ser280 and Ser298 each carry the phosphoserine modification. A compositionally biased stretch (polar residues) spans 295-305 (ASTSPRNQNKP). The stretch at 367–407 (LLRLAKEEVSRQELRQRVRMADNEVMDAFRKIMAARQKKRT) forms a coiled coil. Lys418 carries the N6-acetyllysine modification.

It belongs to the NGG1 family. As to quaternary structure, the PCAF complex is composed of a number of TBP-associated factors (TAFS), such as TAF5, TAF5L, TAF6, TAF6L, TAF9, TAF10 and TAF12, PCAF, and also PCAF-associated factors (PAFs), such as TADA2L/ADA2, TADA3L/ADA3 and SPT3. Interacts directly with TADA2L and PCAF and also with the high-risk HPV oncoprotein E6. Component of the STAGA transcription coactivator-HAT complex, at least composed of SUPT3H, GCN5L2, TAF5L, TAF6L, SUPT7L, TADA3L, TAD1L, TAF10, TAF12, TRRAP and TAF9. Component of the TFTC-HAT complex. Component of the ADA2A-containing complex (ATAC), composed of KAT14, KAT2A, TADA2L, TADA3L, ZZ3, MBIP, WDR5, YEATS2, CCDC101 and DR1.

Its subcellular location is the nucleus. Functionally, functions as a component of the PCAF complex. The PCAF complex is capable of efficiently acetylating histones in a nucleosomal context. The PCAF complex could be considered as the human version of the yeast SAGA complex. Also known as a coactivator for p53/TP53-dependent transcriptional activation. Component of the ATAC complex, a complex with histone acetyltransferase activity on histones H3 and H4. This chain is Transcriptional adapter 3 (TADA3), found in Pongo abelii (Sumatran orangutan).